The chain runs to 517 residues: Crotonobetaine/carnitine--CoA ligase (517 aa).

This sequence belongs to the ATP-dependent AMP-binding enzyme family.

The enzyme catalyses 4-(trimethylamino)butanoate + ATP + CoA = 4-(trimethylamino)butanoyl-CoA + AMP + diphosphate. It carries out the reaction crotonobetaine + ATP + CoA = crotonobetainyl-CoA + AMP + diphosphate. It catalyses the reaction (R)-carnitine + ATP + CoA = (R)-carnitinyl-CoA + AMP + diphosphate. Its pathway is amine and polyamine metabolism; carnitine metabolism. Functionally, catalyzes the transfer of CoA to carnitine, generating the initial carnitinyl-CoA needed for the CaiB reaction cycle. Also has activity toward crotonobetaine and gamma-butyrobetaine. The chain is Crotonobetaine/carnitine--CoA ligase from Escherichia coli O17:K52:H18 (strain UMN026 / ExPEC).